We begin with the raw amino-acid sequence, 82 residues long: Chaplin-E (82 aa).

The first 27 residues, 1–27, serve as a signal peptide directing secretion; it reads MKNLKKAAAVTMVAGGLIAAGAGMASA. Residues 41 to 81 enclose the Chaplin domain; the sequence is SPGVASGNLVQAPIHIPVNAVGNSVNVIGVLNPAFGNLGVN.

It belongs to the chaplin family. Short chaplin subfamily.

Its subcellular location is the cell surface. The protein localises to the secreted. It is found in the cell wall. The protein resides in the fimbrium. In terms of biological role, one of 8 partially redundant surface-active proteins required for efficient formation of aerial mycelium; the short chaplins assemble into a hydrophobic, amyloidal fibrillar surface layer that envelopes and protects aerial hyphae and spores, presumably anchored to the long chaplins. Chaplins have an overlapping function with the surface-active SapB peptide; chaplins are essential on minimal medium while on rich medium both chaplins and SapB are required for efficient aerial hyphae formation. Chaplins are also involved in cell attachment to a hydrophobic surface. Forms amyloid fibrils in vitro probably composed of stacked beta-sheets, at low extracellular concentrations individually restores the ability to form aerial hyphae to a chaplin-deficient strain, but does so less well than other short chaplins. A small chaplin extract (ChpD, ChpE, ChpF, ChpG and ChpH) self-assembles into 2 different amyloids; small fibrils at the air-water interface form an amphipathic membrane that resembles spore-surface structures involved in aerial hyphae formation, and hydrophilic fibrils in solution that resemble the fibers that attach cells to a hydrophobic surface. At the air-water interface the hydrophilic surface is in contact with water (probably equivalent to the peptidoglycan layer), while the hydrophobic face is exposed to the air, making the surface of the aerial hyphae hydrophobic. A minimal chaplin strain capable of forming aerial mycelium/hyphae on minimal medium contains ChpC, ChpE and ChpH. The strain also has restored rodlet formation on the hyphae surface. A second strain with ChpA, ChpD and ChpE makes slightly less robust hyphae. This essential chaplin may coordinate the assembly and/or polymerization of the other chaplins. A small chaplin extract applied to a chaplin-deficient strain restores aerial hyphae formation. The small chaplin extract forms an amyloid-like structure similar to that seen on the surface of cells without rodlets (rdlA-rdlB deletions), and is highly surface active, reducing surface tension from 72 to 26 mJ/m(2), which probably allows escape of hyphae from an aqueous environment into air. In Streptomyces coelicolor (strain ATCC BAA-471 / A3(2) / M145), this protein is Chaplin-E.